The primary structure comprises 181 residues: Large ribosomal subunit protein uL5 (181 aa).

It belongs to the universal ribosomal protein uL5 family. Part of the 50S ribosomal subunit; part of the 5S rRNA/L5/L18/L25 subcomplex. Contacts the 5S rRNA and the P site tRNA. Forms a bridge to the 30S subunit in the 70S ribosome.

Functionally, this is one of the proteins that bind and probably mediate the attachment of the 5S RNA into the large ribosomal subunit, where it forms part of the central protuberance. In the 70S ribosome it contacts protein S13 of the 30S subunit (bridge B1b), connecting the 2 subunits; this bridge is implicated in subunit movement. Contacts the P site tRNA; the 5S rRNA and some of its associated proteins might help stabilize positioning of ribosome-bound tRNAs. This is Large ribosomal subunit protein uL5 from Campylobacter lari (strain RM2100 / D67 / ATCC BAA-1060).